Here is a 361-residue protein sequence, read N- to C-terminus: Phosphoserine aminotransferase (361 aa).

Residue R43 coordinates L-glutamate. Residues 77 to 78, W103, T153, D173, and Q196 contribute to the pyridoxal 5'-phosphate site; that span reads AS. K197 is modified (N6-(pyridoxal phosphate)lysine). A pyridoxal 5'-phosphate-binding site is contributed by 238 to 239; that stretch reads NT.

The protein belongs to the class-V pyridoxal-phosphate-dependent aminotransferase family. SerC subfamily. In terms of assembly, homodimer. Pyridoxal 5'-phosphate serves as cofactor.

Its subcellular location is the cytoplasm. The enzyme catalyses O-phospho-L-serine + 2-oxoglutarate = 3-phosphooxypyruvate + L-glutamate. It catalyses the reaction 4-(phosphooxy)-L-threonine + 2-oxoglutarate = (R)-3-hydroxy-2-oxo-4-phosphooxybutanoate + L-glutamate. It participates in amino-acid biosynthesis; L-serine biosynthesis; L-serine from 3-phospho-D-glycerate: step 2/3. It functions in the pathway cofactor biosynthesis; pyridoxine 5'-phosphate biosynthesis; pyridoxine 5'-phosphate from D-erythrose 4-phosphate: step 3/5. Functionally, catalyzes the reversible conversion of 3-phosphohydroxypyruvate to phosphoserine and of 3-hydroxy-2-oxo-4-phosphonooxybutanoate to phosphohydroxythreonine. The sequence is that of Phosphoserine aminotransferase from Pseudomonas putida (strain ATCC 47054 / DSM 6125 / CFBP 8728 / NCIMB 11950 / KT2440).